A 157-amino-acid polypeptide reads, in one-letter code: Lipoprotein signal peptidase (157 aa).

4 consecutive transmembrane segments (helical) span residues 10–30, 36–56, 58–78, and 84–104; these read LVFIGVFFLIFGVDQAIKHAI, YESLMIDIVLVFNKGVAFSLL, FLEGGLKYLQILLILGLFIFL, and LFKNHAIEFGMVFGAGVSNVL. Residues aspartate 114 and aspartate 131 contribute to the active site. Residues 122-142 traverse the membrane as a helical segment; that stretch reads FDFAIFNFADVMIDVGVGVLL.

Belongs to the peptidase A8 family.

It is found in the cell inner membrane. It carries out the reaction Release of signal peptides from bacterial membrane prolipoproteins. Hydrolyzes -Xaa-Yaa-Zaa-|-(S,diacylglyceryl)Cys-, in which Xaa is hydrophobic (preferably Leu), and Yaa (Ala or Ser) and Zaa (Gly or Ala) have small, neutral side chains.. It participates in protein modification; lipoprotein biosynthesis (signal peptide cleavage). Its function is as follows. This protein specifically catalyzes the removal of signal peptides from prolipoproteins. The polypeptide is Lipoprotein signal peptidase (Helicobacter pylori (strain P12)).